The chain runs to 211 residues: Protein-methionine-sulfoxide reductase heme-binding subunit MsrQ (211 aa).

5 helical membrane-spanning segments follow: residues 8–28, 54–74, 82–102, 116–136, and 153–173; these read VIWL…WLVW, FLLA…PLLI, LWCF…ELGV, PYLT…FTST, and FVYL…KIIS.

Belongs to the MsrQ family. Heterodimer of a catalytic subunit (MsrP) and a heme-binding subunit (MsrQ). It depends on FMN as a cofactor. Heme b serves as cofactor.

It localises to the cell inner membrane. In terms of biological role, part of the MsrPQ system that repairs oxidized periplasmic proteins containing methionine sulfoxide residues (Met-O), using respiratory chain electrons. Thus protects these proteins from oxidative-stress damage caused by reactive species of oxygen and chlorine generated by the host defense mechanisms. MsrPQ is essential for the maintenance of envelope integrity under bleach stress, rescuing a wide series of structurally unrelated periplasmic proteins from methionine oxidation, including the primary periplasmic chaperone SurA and the lipoprotein Pal. MsrQ provides electrons for reduction to the reductase catalytic subunit MsrP, using the quinone pool of the respiratory chain. This Escherichia coli O6:K15:H31 (strain 536 / UPEC) protein is Protein-methionine-sulfoxide reductase heme-binding subunit MsrQ.